The sequence spans 613 residues: 8-methylmenaquinol:fumarate reductase flavoprotein subunit (613 aa).

A signal peptide (tat-type signal) is located at residues 1–33 (MSEQFTRREFLQSACITMGALAVSTSGVDRAFA). Residues 53-58 (GSGAAG), 78-93 (SKVMPTRSATTMAEGG), and D255 each bind FAD. Residues H276 and T288 each coordinate substrate. The active-site Proton acceptor is R319. Substrate is bound at residue H387. E413 contacts FAD. R424 is a binding site for substrate. 429–430 (SL) provides a ligand contact to FAD.

It belongs to the FAD-dependent oxidoreductase 2 family. FRD/SDH subfamily. As to quaternary structure, the MFR complex is composed of three subunits: a flavoprotein (SdhA), an iron-sulfur protein (SdhB), and one hydrophobic anchor protein (SdhE). Requires FAD as cofactor. Predicted to be exported by the Tat system. The position of the signal peptide cleavage has not been experimentally proven.

It is found in the periplasm. It localises to the cell membrane. It catalyses the reaction 8-methylmenaquinone-6 + succinate = 8-methylmenaquinol-6 + fumarate. In terms of biological role, flavoprotein subunit of 8-methylmenaquinol:fumarate reductase (MFR), that catalyzes the reduction of fumarate using 8-methylmenaquinol-6 as electron donor. The complex shows no succinate oxidation activity. Is involved in anaerobic metabolism. SdhA contains the dicarboxylate reduction site. This chain is 8-methylmenaquinol:fumarate reductase flavoprotein subunit, found in Wolinella succinogenes (strain ATCC 29543 / DSM 1740 / CCUG 13145 / JCM 31913 / LMG 7466 / NCTC 11488 / FDC 602W) (Vibrio succinogenes).